Here is a 391-residue protein sequence, read N- to C-terminus: Ferrochelatase (391 aa).

Fe cation contacts are provided by His196 and Glu281.

The protein belongs to the ferrochelatase family.

Its subcellular location is the cytoplasm. The catalysed reaction is heme b + 2 H(+) = protoporphyrin IX + Fe(2+). It participates in porphyrin-containing compound metabolism; protoheme biosynthesis; protoheme from protoporphyrin-IX: step 1/1. Its function is as follows. Catalyzes the ferrous insertion into protoporphyrin IX. In Parasynechococcus marenigrum (strain WH8102), this protein is Ferrochelatase.